Consider the following 562-residue polypeptide: Solute carrier family 22 member 6 (562 aa).

The Cytoplasmic segment spans residues 1 to 15 (MPFSELLEQVGSTGR). A helical transmembrane segment spans residues 16–36 (FQVLHVTLLCIPVLMMASHNL). Over 37-147 (LQNFVATVPS…LVCDMHSFKQ (111 aa)) the chain is Extracellular. The chain crosses the membrane as a helical span at residues 148–168 (MGQTIYMGGVLVGALLFGGLS). At 169–174 (DRYGRR) the chain is on the cytoplasmic side. Residues 175–195 (ILLLISNLLMAVSGTCAAFSS) form a helical membrane-spanning segment. At 196-205 (SFSLFCVFRF) the chain is on the extracellular side. The chain crosses the membrane as a helical span at residues 206 to 226 (GCGLALSGLGLNTFSLIVEWI). Topologically, residues 227 to 235 (PTRIRTAVG) are cytoplasmic. The helical transmembrane segment at 236 to 256 (TTTGYCYTLGQLILVLLAYFI) threads the bilayer. Residues 257–260 (RDWR) lie on the Extracellular side of the membrane. A helical transmembrane segment spans residues 261–281 (WLTLAVSLPFYVFFLIAWWFH). Residues 282-351 (ESSRWLALSN…FNTPAMRKRT (70 aa)) are Cytoplasmic-facing. Residues 352–372 (LCLSAVWLSTSFAYYGLAMDL) form a helical membrane-spanning segment. Topologically, residues 373 to 378 (DKFGVD) are extracellular. A helical transmembrane segment spans residues 379-399 (IYLIQVIFGAVDIPAKVVVVV). Residues 400–408 (SMSLIGRRR) lie on the Cytoplasmic side of the membrane. A helical transmembrane segment spans residues 409–429 (SQCAVLVVAGITILLNLLVPY). Residues 430–444 (DKQTIRTCLAVLGKG) lie on the Extracellular side of the membrane. Residues 445–465 (CLAASFNCCYLYSGELFPTII) traverse the membrane as a helical segment. At 466 to 468 (RQN) the chain is on the cytoplasmic side. Residues 469 to 489 (GMGWVSMMARIGAMVAPMVLL) form a helical membrane-spanning segment. Over 490–495 (TRDYIP) the chain is Extracellular. Residues 496–516 (WLPGLIYGGAPILSGLAAIFL) traverse the membrane as a helical segment. Over 517 to 562 (PETLGYPLPDTIQDVEESGSGRKSKMSTKETITLQDKQANLLKQSA) the chain is Cytoplasmic.

Belongs to the major facilitator (TC 2.A.1) superfamily. Organic cation transporter (TC 2.A.1.19) family. Post-translationally, glycosylated. Glycosylation is necessary for proper targeting of the transporter to the plasma membrane.

It localises to the cell membrane. The protein resides in the basolateral cell membrane. The protein localises to the basal cell membrane. Its function is as follows. Involved in the renal elimination of endogenous and exogenous organic anions. Functions as organic anion exchanger when the uptake of one molecule of organic anion is coupled with an efflux of one molecule of endogenous dicarboxylic acid (glutarate, ketoglutarate, etc). Mediates the sodium-independent uptake of p-aminohippurate (PAH), 2,3-dimercapto-1-propanesulfonic acid (DMPS), cidofovir, adefovir, 9-(2-phosphonylmethoxyethyl) guanine (PMEG), 9-(2-phosphonylmethoxyethyl) diaminopurine (PMEDAP), ochratoxin (OTA), acyclovir (ACV), 3'-azido-3-'deoxythymidine (AZT), cimetidine (CMD), 2,4-dichloro-phenoxyacetate (2,4-D), hippurate (HA), indoleacetate (IA), indoxyl sulfate (IS), 3-carboxy-4-methyl-5-propyl-2-furanpropionate (CMPF) and edaravone sulfate. Mediates the sodium-independent uptake of p-aminohippurate (PAH). PAH uptake is inhibited by p-chloromercuribenzenesulphonate (PCMBS), diethyl pyrocarbonate (DEPC), indomethacin, sulindac, diclofenac, carprofen, okadaic acid, benzothiazolylcysteine (BTC), S-chlorotrifluoroethylcysteine (CTFC), cysteine S-conjugates S-dichlorovinylcysteine (DCVC), furosemide, steviol, phorbol 12-myristate 13-acetate (PMA), calcium ionophore A23187, benzylpenicillin, bumetamide, losartan, probenecid, phenol red, urate, glutarate and alpha-ketoglutarate. PAH uptake is inhibited by glutarate. This is Solute carrier family 22 member 6 (SLC22A6) from Pseudopleuronectes americanus (Winter flounder).